The following is a 241-amino-acid chain: ATP synthase subunit a (241 aa).

The next 5 membrane-spanning stretches (helical) occupy residues 30–50, 91–111, 128–148, 193–213, and 214–234; these read GQVFMTSWIVIGAILALVVVG, FIGTLFLFIFVSNWGGSLVPW, INTTVALALLVSLSYFYAGLS, LVVAVLVFLVPLFLPVPVMFL, and GLFTSAIQALIFATLAAYYIG.

The protein belongs to the ATPase A chain family. In terms of assembly, F-type ATPases have 2 components, CF(1) - the catalytic core - and CF(0) - the membrane proton channel. CF(1) has five subunits: alpha(3), beta(3), gamma(1), delta(1), epsilon(1). CF(0) has four main subunits: a, b, b' and c.

It localises to the cellular thylakoid membrane. Its function is as follows. Key component of the proton channel; it plays a direct role in the translocation of protons across the membrane. The polypeptide is ATP synthase subunit a (Prochlorococcus marinus (strain MIT 9313)).